Consider the following 1321-residue polypeptide: Insulin receptor substrate 2 (1321 aa).

Pro residues predominate over residues 1-10 (MASAPLPGPP). 2 disordered regions span residues 1-32 (MASA…HSVR) and 51-73 (RGPG…PPRL). The PH domain maps to 16–144 (DGPNLNNNNN…WYRALTDLVS (129 aa)). Low complexity predominate over residues 18–28 (PNLNNNNNNNN). In terms of domain architecture, IRS-type PTB spans 191-295 (YREVWQVNLK…EAMKALKELF (105 aa)). The interval 299-536 (PRSKSQSSGS…ARDGSGGELY (238 aa)) is disordered. Phosphoserine is present on residues serine 303 and serine 343. A Phosphothreonine modification is found at threonine 347. Position 362 is a phosphoserine (serine 362). Gly residues predominate over residues 364 to 376 (GDGGAAGGAGTAG). A phosphoserine mark is found at serine 381, serine 385, and serine 388. Arginine 409 is subject to Omega-N-methylarginine. 2 stretches are compositionally biased toward low complexity: residues 435–456 (SPPA…SGSY) and 478–490 (PSSG…GSPS). The residue at position 517 (threonine 517) is a Phosphothreonine. Serine 520 is subject to Phosphoserine. Residue threonine 524 is modified to Phosphothreonine. At tyrosine 536 the chain carries Phosphotyrosine; by INSR. Positions 536-539 (YGYM) match the YXXM motif 1 motif. A Phosphoserine; by PLK1 modification is found at serine 556. A Phosphoserine modification is found at serine 573. 2 positions are modified to phosphothreonine: threonine 575 and threonine 576. Residue serine 590 is modified to Phosphoserine. The YXXM motif 2 motif lies at 594–597 (YTLM). Phosphoserine occurs at positions 604 and 616. Tyrosine 649 bears the Phosphotyrosine mark. Short sequence motifs (YXXM motif) lie at residues 649-652 (YMPM) and 671-674 (YMPM). Position 671 is a phosphotyrosine; by INSR (tyrosine 671). Residues serine 675, serine 678, serine 727, and serine 728 each carry the phosphoserine modification. Positions 734 to 737 (YMRM) match the YXXM motif 5 motif. Phosphoserine is present on serine 762. Threonine 771 carries the post-translational modification Phosphothreonine. Serine 796 carries the phosphoserine modification. The YXXM motif 6 signature appears at 814–817 (YVLM). Serine 819 carries the phosphoserine modification. Disordered regions lie at residues 834–871 (ATPG…RPEG) and 888–1091 (EGLQ…ASPT). Serine 907 bears the Phosphoserine mark. Position 911 is a phosphotyrosine; by INSR (tyrosine 911). Residues 930 to 959 (LLASAASSSSLLSASSPASSLGSGTPGTSS) are compositionally biased toward low complexity. A Phosphoserine modification is found at serine 965. Tyrosine 970 is modified (phosphotyrosine; by INSR). The span at 1005–1014 (PYPPLPPRPS) shows a compositional bias: pro residues. The segment covering 1039–1055 (AATSQGPTAGSSMSSEP) has biased composition (polar residues). The YXXM motif 7 signature appears at 1061–1064 (YTEM). Residue threonine 1071 is modified to Phosphothreonine. The span at 1072 to 1082 (PPQPIVAPPKP) shows a compositional bias: pro residues. Serine 1089 bears the Phosphoserine mark. Serine 1098 carries the phosphoserine; by PLK1 modification. Residues 1110–1198 (LQVSQPPDPH…TSPGQAQPLV (89 aa)) are disordered. Positions 1139–1154 (ETFSSTTTVTPVSPSF) are enriched in low complexity. At threonine 1148 the chain carries Phosphothreonine. Residues serine 1151, serine 1163, serine 1165, serine 1175, and serine 1190 each carry the phosphoserine modification. Positions 1163–1179 (SASVENVSLRKSSEGSS) are enriched in polar residues. The residue at position 1242 (tyrosine 1242) is a Phosphotyrosine; by INSR. The segment at 1251–1275 (QGSLAQSQPQPGDKNSWSRTRSLGG) is disordered. The span at 1253–1271 (SLAQSQPQPGDKNSWSRTR) shows a compositional bias: polar residues. A Phosphotyrosine; by INSR modification is found at tyrosine 1303. Lysine 1314 participates in a covalent cross-link: Glycyl lysine isopeptide (Lys-Gly) (interchain with G-Cter in ubiquitin).

In terms of assembly, interacts with PHIP. Interacts with SH2B1; this interaction enhances leptin-induced activation of the PI3-kinase pathway. Interacts with GRB2. Interacts with PIK3R1. Interacts with DVL2; this interaction promotes the Wnt/beta-catenin signaling pathway. Post-translationally, phosphorylation fluctuates in a cell-cycle dependent manner with hyperphosphorylation during mitosis. Phosphorylated at Ser-556 and Ser-1098 by PLK1; these phosphorylations prevent the activation of the PI3K pathway upon growth factor stimulation by inhibiting the binding between IRS2 and the PI3K pathway components and increasing the level of IRS2 protein degradation. In addition, they prevent premature mitotic exit. In terms of processing, monoubiquitinated by NEDD4; leading to enhanced IGF1 signaling. During cell cycle, ubiquitination and proteasomal degradation are controlled by FZR1. In terms of tissue distribution, skeletal muscle, lung, brain, liver, kidney, heart and spleen.

It localises to the cytoplasm. It is found in the cytosol. Its function is as follows. Signaling adapter protein that participates in the signal transduction from two prominent receptor tyrosine kinases, insulin receptor/INSR and insulin-like growth factor I receptor/IGF1R. Plays therefore an important role in development, growth, glucose homeostasis as well as lipid metabolism. Upon phosphorylation by the insulin receptor, functions as a signaling scaffold that propagates insulin action through binding to SH2 domain-containing proteins including the p85 regulatory subunit of PI3K, NCK1, NCK2, GRB2 or SHP2. Recruitment of GRB2 leads to the activation of the guanine nucleotide exchange factor SOS1 which in turn triggers the Ras/Raf/MEK/MAPK signaling cascade. Activation of the PI3K/AKT pathway is responsible for most of insulin metabolic effects in the cell, and the Ras/Raf/MEK/MAPK is involved in the regulation of gene expression and in cooperation with the PI3K pathway regulates cell growth and differentiation. Acts a positive regulator of the Wnt/beta-catenin signaling pathway through suppression of DVL2 autophagy-mediated degradation leading to cell proliferation. Plays a role in cell cycle progression by promoting a robust spindle assembly checkpoint (SAC) during M-phase. In macrophages, IL4-induced tyrosine phosphorylation of IRS2 leads to the recruitment and activation of phosphoinositide 3-kinase (PI3K). This is Insulin receptor substrate 2 (Irs2) from Mus musculus (Mouse).